The following is a 210-amino-acid chain: Large ribosomal subunit protein uL3 (210 aa).

The segment at 125-151 (RHGQSRGPMSHGSRYHRRPGSMGPVAP) is disordered.

It belongs to the universal ribosomal protein uL3 family. As to quaternary structure, part of the 50S ribosomal subunit. Forms a cluster with proteins L14 and L19.

In terms of biological role, one of the primary rRNA binding proteins, it binds directly near the 3'-end of the 23S rRNA, where it nucleates assembly of the 50S subunit. This Bacillus mycoides (strain KBAB4) (Bacillus weihenstephanensis) protein is Large ribosomal subunit protein uL3.